We begin with the raw amino-acid sequence, 352 residues long: MELTELLLVVMLLLTARLDPCLPAPPACDPRLLNKMLRDSHVLHSRLSQCPDIYPLSTPVLLPAVDFSLGEWKTQKEQTKAQDVWGAVALLLDGVLAARGQLGPSCLSSLLGQLSGQVRLLLGALQGLLGTQLPPQGRTTTHKDPNAIFLSFQQLLRGKVRFLLLVAGPTLCAKQSQPTTAVPTNTSLFLTLRKLPNRTSGLLETNSSISARTTGSGLLKRLQGFRAKIPGLLNQTSRSLNQTPGHLSRTHGPLNGTHGLLPGLSLTALGAPDIPPGTSDMDALPPNLWPRYSPSPIHPPPGQYTLFSPLPTSPTPQNPLQPPPPDPSATANSTSPLLIAAHPHFQNLSQEE.

An N-terminal signal peptide occupies residues 1–23; that stretch reads MELTELLLVVMLLLTARLDPCLP. Disulfide bonds link cysteine 28–cysteine 172 and cysteine 50–cysteine 106. Asparagine 185, asparagine 197, asparagine 206, asparagine 234, and asparagine 255 each carry an N-linked (GlcNAc...) asparagine glycan. Positions 233–245 are enriched in polar residues; the sequence is LNQTSRSLNQTPG. Disordered regions lie at residues 233 to 259 and 292 to 352; these read LNQT…GTHG and YSPS…SQEE. Pro residues predominate over residues 311–327; sequence PTSPTPQNPLQPPPPDP. Residues asparagine 332 and asparagine 347 are each glycosylated (N-linked (GlcNAc...) asparagine).

It belongs to the EPO/TPO family.

The protein localises to the secreted. Its function is as follows. Lineage-specific cytokine affecting the proliferation and maturation of megakaryocytes from their committed progenitor cells. It acts at a late stage of megakaryocyte development. It may be the major physiological regulator of circulating platelets. The sequence is that of Thrombopoietin (THPO) from Canis lupus familiaris (Dog).